Reading from the N-terminus, the 91-residue chain is UPF0358 protein Sca_0738 (91 aa).

This sequence belongs to the UPF0358 family.

This is UPF0358 protein Sca_0738 from Staphylococcus carnosus (strain TM300).